The chain runs to 103 residues: Large ribosomal subunit protein bL21 (103 aa).

It belongs to the bacterial ribosomal protein bL21 family. As to quaternary structure, part of the 50S ribosomal subunit. Contacts protein L20.

Its function is as follows. This protein binds to 23S rRNA in the presence of protein L20. This chain is Large ribosomal subunit protein bL21, found in Ralstonia nicotianae (strain ATCC BAA-1114 / GMI1000) (Ralstonia solanacearum).